A 470-amino-acid polypeptide reads, in one-letter code: L-seryl-tRNA(Sec) selenium transferase (470 aa).

N6-(pyridoxal phosphate)lysine is present on Lys292.

It belongs to the SelA family. The cofactor is pyridoxal 5'-phosphate.

It is found in the cytoplasm. It catalyses the reaction L-seryl-tRNA(Sec) + selenophosphate + H(+) = L-selenocysteinyl-tRNA(Sec) + phosphate. Its pathway is aminoacyl-tRNA biosynthesis; selenocysteinyl-tRNA(Sec) biosynthesis; selenocysteinyl-tRNA(Sec) from L-seryl-tRNA(Sec) (bacterial route): step 1/1. Its function is as follows. Converts seryl-tRNA(Sec) to selenocysteinyl-tRNA(Sec) required for selenoprotein biosynthesis. In Moorella thermoacetica (strain ATCC 39073 / JCM 9320), this protein is L-seryl-tRNA(Sec) selenium transferase.